A 230-amino-acid chain; its full sequence is Voltage-gated hydrogen channel 1 (230 aa).

Topologically, residues Met-1 to Lys-58 are cytoplasmic. The chain crosses the membrane as a helical span at residues Phe-59 to Leu-79. The Extracellular portion of the chain corresponds to Leu-80–Ile-96. A helical membrane pass occupies residues Phe-97 to Phe-119. At Arg-120–Lys-127 the chain is on the cytoplasmic side. The helical transmembrane segment at Phe-128–Ser-148 threads the bilayer. The Extracellular portion of the chain corresponds to Arg-149 to Ala-155. The helical transmembrane segment at Val-156–Val-176 threads the bilayer. Over Ser-177–Ser-230 the chain is Cytoplasmic. The stretch at Val-178–Asn-225 forms a coiled coil.

The protein belongs to the hydrogen channel family. Homodimer.

It localises to the membrane. The protein resides in the cell membrane. Functionally, mediates the voltage-dependent proton permeability of excitable membranes. Forms a proton-selective channel through which protons may pass in accordance with their electrochemical gradient. This Xenopus laevis (African clawed frog) protein is Voltage-gated hydrogen channel 1 (hvcn1).